Reading from the N-terminus, the 290-residue chain is 4-hydroxybenzoate octaprenyltransferase (290 aa).

8 helical membrane-spanning segments follow: residues 21-41 (IGTLLLLWPTLWALFLSVKGM), 44-64 (LSILSIFVLGVIFMRAAGCVI), 84-104 (LATGAATPEEAKWLFVLLVFC), 106-126 (FILVLFLNTYAIVLSFIAVFL), 142-162 (LFLGMAFGWSIPMAYGASIEA), 212-232 (IISLLQIVTLFFLGLIGYLSQ), 235-255 (TSYFVVLFLATLLFVYQCKLI), and 267-287 (FLNNNYFGAMVFVAFLFGIFF).

The protein belongs to the UbiA prenyltransferase family. It depends on Mg(2+) as a cofactor.

The protein resides in the cell inner membrane. It catalyses the reaction all-trans-octaprenyl diphosphate + 4-hydroxybenzoate = 4-hydroxy-3-(all-trans-octaprenyl)benzoate + diphosphate. Its pathway is cofactor biosynthesis; ubiquinone biosynthesis. Its function is as follows. Catalyzes the prenylation of para-hydroxybenzoate (PHB) with an all-trans polyprenyl group. Mediates the second step in the final reaction sequence of ubiquinone-8 (UQ-8) biosynthesis, which is the condensation of the polyisoprenoid side chain with PHB, generating the first membrane-bound Q intermediate 3-octaprenyl-4-hydroxybenzoate. In Pasteurella multocida (strain Pm70), this protein is 4-hydroxybenzoate octaprenyltransferase.